The primary structure comprises 139 residues: General odorant-binding protein 56a (139 aa).

Residues 1–19 form the signal peptide; sequence MNSYFVIALSALFVTLAVG. An N-linked (GlcNAc...) asparagine glycan is attached at asparagine 23. 3 cysteine pairs are disulfide-bonded: cysteine 39–cysteine 71, cysteine 67–cysteine 118, and cysteine 109–cysteine 127.

This sequence belongs to the PBP/GOBP family. In terms of tissue distribution, expressed in ventral pits of larvae. In adults, it is not specifically expressed in chemosensory organs. Also expressed in stalk cells at the proximal tip of the wing disk.

The protein resides in the secreted. Its function is as follows. Present in the aqueous fluid surrounding olfactory sensory dendrites and are thought to aid in the capture and transport of hydrophobic odorants into and through this fluid. In Drosophila melanogaster (Fruit fly), this protein is General odorant-binding protein 56a (Obp56a).